A 355-amino-acid chain; its full sequence is Spore germination protein XB (355 aa).

The next 10 helical transmembrane spans lie at 2-24 (VNFFQIALVLIGSTGIINHVIII), 34-56 (DSWISIIILSLVYIIWIPCVFIV), 69-91 (LMRNYGGFITYPLLSIIVLYLII), 106-128 (FYLPETPRILLGVLLSIICFYNI), 135-157 (IALTTGILLPVVFLLGFFVMIAN), 180-197 (GMIYPAAGFVELIFILFL), 210-232 (LIIVGIILAGITLGPTIAAIVEF), 265-287 (VYQWLVGVFIRISLVIFLIPDVL), 299-321 (ISILLICMVIICILPISDASFYW), and 326-348 (VFLPISAIGLFLFSMLLLVFVWV).

Belongs to the amino acid-polyamine-organocation (APC) superfamily. Spore germination protein (SGP) (TC 2.A.3.9) family.

Its subcellular location is the cell membrane. Functionally, may allow B.anthracis to germinate within phagocytic cells and therefore involved in virulence. The sequence is that of Spore germination protein XB (gerXB) from Bacillus anthracis.